The following is a 574-amino-acid chain: Protein NDNF (574 aa).

The N-terminal stretch at 1–19 (MTWRCGCYGLVLLVLGVMG) is a signal peptide. The disordered stretch occupies residues 97 to 118 (EDRSGEGSGEPEPLEQQKQQVT). 2 Fibronectin type-III domains span residues 174–329 (PELP…TNMS) and 451–560 (PALP…SGHS). An N-linked (GlcNAc...) asparagine glycan is attached at asparagine 327.

It is found in the secreted. Functionally, secretory protein that plays a role in various cellular processes. Acts as a chemorepellent acting on gonadotropin-releasing hormone (GnRH) expressing neurons regulating their migration to the hypothalamus. Also promotes neuron migration, growth and survival as well as neurite outgrowth and is involved in the development of the olfactory system. May also act through the regulation of growth factors activity and downstream signaling. Also regulates extracellular matrix assembly and cell adhesiveness. Promotes endothelial cell survival, vessel formation and plays an important role in the process of revascularization through NOS3-dependent mechanisms. The chain is Protein NDNF (ndnf) from Danio rerio (Zebrafish).